An 844-amino-acid polypeptide reads, in one-letter code: Fe(2+) transport protein A/Fe(2+) transporter FeoB fusion protein (844 aa).

The interval 1-73 (MRLSELHTGD…EDAAKIEVEL (73 aa)) is feoA. A feoB region spans residues 74–844 (ISSNATSSPA…LIYRIGILFF (771 aa)). Positions 79-106 (TSSPASNDIGEQSANPDSNESIPTNPTE) are enriched in polar residues. The segment at 79 to 110 (TSSPASNDIGEQSANPDSNESIPTNPTEDISA) is disordered. In terms of domain architecture, FeoB-type G spans 126-289 (VIRVALIGNP…FDTLISIHEG (164 aa)). Residues 133 to 140 (GNPNCGKT), 158 to 162 (GVTVE), 179 to 182 (DLPG), 240 to 243 (NMFD), and 269 to 271 (VGR) contribute to the GTP site. The next 8 helical transmembrane spans lie at 418–438 (VLGFPLFLLFMFIMFEATFVL), 475–495 (IGGVGGVIVFLPNILILYFFI), 520–540 (LHGKSFIPLIMGFGCNVPAIM), 559–579 (PLMSCSARLPVYLLLAGAFFP), 581–601 (SAGLVLFGLYFLGILLAVLLA), 646–666 (MGSIILLASIVIWFLSYYPRY), 786–806 (IIALALMAFVLIYFPCIATVV), and 817–837 (WAVFSIIYSCSLAWIVSFLIY).

This sequence in the N-terminal section; belongs to the FeoA family. In the C-terminal section; belongs to the TRAFAC class TrmE-Era-EngA-EngB-Septin-like GTPase superfamily. FeoB GTPase (TC 9.A.8) family.

It is found in the cell inner membrane. Probable transporter of a GTP-driven Fe(2+) uptake system. The chain is Fe(2+) transport protein A/Fe(2+) transporter FeoB fusion protein from Porphyromonas gingivalis (strain ATCC BAA-308 / W83).